Here is a 447-residue protein sequence, read N- to C-terminus: C4-dicarboxylate transport protein 3 (447 aa).

The next 8 membrane-spanning stretches (helical) occupy residues 5–27 (TLGK…GVAA), 42–64 (IKLI…IARM), 77–99 (ALVY…VNLV), 146–165 (LARN…GIAL), 186–208 (VFSI…MAFT), 223–245 (LMAT…VARL), 315–337 (IFVA…LGVL), and 352–374 (FITL…VLLL).

Belongs to the dicarboxylate/amino acid:cation symporter (DAACS) (TC 2.A.23) family.

The protein resides in the cell inner membrane. Its function is as follows. Responsible for the transport of dicarboxylates such as succinate, fumarate, and malate from the periplasm across the membrane. This is C4-dicarboxylate transport protein 3 (dctA3) from Ralstonia nicotianae (strain ATCC BAA-1114 / GMI1000) (Ralstonia solanacearum).